A 504-amino-acid chain; its full sequence is Apoptosis inhibitor 5 (504 aa).

The ARM-like and Heat-like helical repeats stretch occupies residues 1–360 (MPTVEELYRN…HQLGRKLPDF (360 aa)). At lysine 251 the chain carries N6-acetyllysine. Positions 370–391 (LKDFKIRLQYFARGLQVYIRQL) are leucine-zipper. Threonine 399 is subject to Phosphothreonine. The segment at 452–504 (GQKRASEDTTSGSPPKKSSAGPKRDARQIYNPPSGKYSSNLGNFNYERSLQGK) is disordered. Residues 454–475 (KRASEDTTSGSPPKKSSAGPKR) carry the Nuclear localization signal motif. Serine 462, serine 464, and serine 469 each carry phosphoserine. The segment covering 462 to 472 (SGSPPKKSSAG) has biased composition (low complexity). A compositionally biased stretch (polar residues) spans 487–504 (KYSSNLGNFNYERSLQGK).

The protein belongs to the API5 family. Monomer. Interacts with FGF2 and ACIN1. Acetylation at Lys-251 impairs antiapoptotic function.

Its subcellular location is the nucleus. It is found in the cytoplasm. In terms of biological role, antiapoptotic factor that may have a role in protein assembly. Negatively regulates ACIN1. By binding to ACIN1, it suppresses ACIN1 cleavage from CASP3 and ACIN1-mediated DNA fragmentation. Also known to efficiently suppress E2F1-induced apoptosis. This chain is Apoptosis inhibitor 5 (API5), found in Pongo abelii (Sumatran orangutan).